The following is an 87-amino-acid chain: Translation initiation factor IF-1 (87 aa).

One can recognise an S1-like domain in the interval 16–87 (LSKEDVIEME…TKGRISYRHK (72 aa)).

This sequence belongs to the IF-1 family. As to quaternary structure, component of the 30S ribosomal translation pre-initiation complex which assembles on the 30S ribosome in the order IF-2 and IF-3, IF-1 and N-formylmethionyl-tRNA(fMet); mRNA recruitment can occur at any time during PIC assembly.

The protein localises to the cytoplasm. Functionally, one of the essential components for the initiation of protein synthesis. Stabilizes the binding of IF-2 and IF-3 on the 30S subunit to which N-formylmethionyl-tRNA(fMet) subsequently binds. Helps modulate mRNA selection, yielding the 30S pre-initiation complex (PIC). Upon addition of the 50S ribosomal subunit IF-1, IF-2 and IF-3 are released leaving the mature 70S translation initiation complex. In Magnetococcus marinus (strain ATCC BAA-1437 / JCM 17883 / MC-1), this protein is Translation initiation factor IF-1.